Here is a 161-residue protein sequence, read N- to C-terminus: Trivalent organoarsenical cleaving enzyme (161 aa).

The 118-residue stretch at 2 to 119 folds into the VOC domain; that stretch reads KYAHVGLNVT…DGNEWEFFYT (118 aa). Residues His-5 and His-62 each contribute to the Fe(2+) site. Residues Cys-96 and Cys-97 each contribute to the roxarsone (III) site. Glu-115 is a binding site for Fe(2+).

Requires Fe(2+) as cofactor.

The catalysed reaction is methylarsonous acid + AH2 + O2 = arsenite + methanol + A + H(+). It carries out the reaction roxarsone (III) + AH2 + O2 = 4-hydroxy-3-nitrocyclohexa-2,5-dien-1-one + arsenite + A + H(+). The enzyme catalyses nitarsone (III) + AH2 + O2 = 4-nitrocyclohexa-2,5-dien-1-one + arsenite + A + H(+). It catalyses the reaction 4-aminophenylarsonous acid + AH2 + O2 = 4-aminocyclohexa-2,5-dien-1-one + arsenite + A. With respect to regulation, inhibited in vitro by reagents that chemically modify histidine residues (diethylpyrocarbonate (DEPC)), aspartate or glutamate residues (1-ethyl-3-(3-(dimethylamino)propyl) carbodiimide (EDC)), or cysteine residues (N-ethylmaleimide (NEM) or iodoacetamide (IAA)). In terms of biological role, nonheme iron-dependent dioxygenase that can break carbon-arsenic bonds, playing a role in the detoxification of environmental organoarsenical compounds. Catalyzes the oxygen-dependent demethylation of highly toxic methylarsonous acid (MAs(III)) to arsenite, which can then be exported out of the cell. Can also cleave the C-As bond in several trivalent aromatic arsenicals, including roxarsone (III), nitarsone (III) and (4-aminophenyl)arsonous acid. Organoarsenical degradation by this enzyme is proposed to have a significant impact on the arsenic biogeocycle that maintains a balance between organic and inorganic species. In Bacillus sp. (strain MD1), this protein is Trivalent organoarsenical cleaving enzyme.